Here is a 175-residue protein sequence, read N- to C-terminus: Protein-export protein SecB (175 aa).

This sequence belongs to the SecB family. Homotetramer, a dimer of dimers. One homotetramer interacts with 1 SecA dimer.

It localises to the cytoplasm. Functionally, one of the proteins required for the normal export of preproteins out of the cell cytoplasm. It is a molecular chaperone that binds to a subset of precursor proteins, maintaining them in a translocation-competent state. It also specifically binds to its receptor SecA. The polypeptide is Protein-export protein SecB (Anaplasma marginale (strain Florida)).